Here is a 523-residue protein sequence, read N- to C-terminus: Butyrophilin subfamily 2 member A2 (523 aa).

A signal peptide spans 1 to 32; sequence MEPAAALHFSLPASLLLLLLLLLLSLCALVSA. The Extracellular portion of the chain corresponds to 33–265; the sequence is QFTVVGPANP…AVILTASPWM (233 aa). The Ig-like V-type domain maps to 34-145; it reads FTVVGPANPI…SYDEAILRLV (112 aa). 4 N-linked (GlcNAc...) asparagine glycosylation sites follow: Asn-50, Asn-118, Asn-220, and Asn-226. Residues Cys-55 and Cys-129 are joined by a disulfide bond. The Ig-like C2-type domain maps to 153-234; sequence PLIEIKAQED…VNNTLLGQEK (82 aa). A helical membrane pass occupies residues 266 to 286; the sequence is VSMTVILAVFIIFMAVSICCI. Positions 286–321 form a coiled coil; it reads IKKLQREKKILSGEKKVEQEEKEIAQQLQEELRWRR. The Cytoplasmic portion of the chain corresponds to 287–523; the sequence is KKLQREKKIL…LHRVGTHQSL (237 aa). Residues 309–502 enclose the B30.2/SPRY domain; it reads IAQQLQEELR…IFICPALTGA (194 aa).

This sequence belongs to the immunoglobulin superfamily. BTN/MOG family. Post-translationally, N-glycosylated. Highly expressed in brain, bone marrow, small intestine, muscle, spleen and pancreas. Moderate expression was seen in lung, liver and kidney.

It is found in the membrane. Inhibits the proliferation of CD4 and CD8 T-cells activated by anti-CD3 antibodies, T-cell metabolism and IL2 and IFNG secretion. The sequence is that of Butyrophilin subfamily 2 member A2 (BTN2A2) from Homo sapiens (Human).